Consider the following 198-residue polypeptide: Small ribosomal subunit protein uS7 (198 aa).

This sequence belongs to the universal ribosomal protein uS7 family. In terms of assembly, part of the 30S ribosomal subunit.

Its function is as follows. One of the primary rRNA binding proteins, it binds directly to 16S rRNA where it nucleates assembly of the head domain of the 30S subunit. Is located at the subunit interface close to the decoding center. This is Small ribosomal subunit protein uS7 from Desulfurococcus mucosus (Desulfurococcus mobilis).